The primary structure comprises 294 residues: uncharacterized protein (294 aa).

A Tyrosine-protein phosphatase domain is found at 13–151 (QCSQIRPYLY…LIDLEQKLRG (139 aa)). Cysteine 95 functions as the Phosphocysteine intermediate in the catalytic mechanism. The tract at residues 234-294 (PTLLVPSSSS…WRLSFHKDVV (61 aa)) is disordered.

Belongs to the protein-tyrosine phosphatase family. Non-receptor class dual specificity subfamily.

This is an uncharacterized protein from Caenorhabditis elegans.